The primary structure comprises 271 residues: Co-chaperone protein DjlA (271 aa).

The Periplasmic portion of the chain corresponds to 1 to 6 (MQYWGK). Residues 7–31 (IIGVAVALLMGGGFWGVVLGLLIGH) form a helical membrane-spanning segment. At 32–271 (MFDKARSRKM…ELIKQQKGFK (240 aa)) the chain is on the cytoplasmic side. In terms of domain architecture, J spans 205-271 (DACNVLGVKP…ELIKQQKGFK (67 aa)).

As to quaternary structure, homodimer.

The protein resides in the cell inner membrane. Functionally, regulatory DnaK co-chaperone. Direct interaction between DnaK and DjlA is needed for the induction of the wcaABCDE operon, involved in the synthesis of a colanic acid polysaccharide capsule, possibly through activation of the RcsB/RcsC phosphotransfer signaling pathway. The colanic acid capsule may help the bacterium survive conditions outside the host. The sequence is that of Co-chaperone protein DjlA from Escherichia coli O157:H7.